The sequence spans 214 residues: Cytochrome c biogenesis ATP-binding export protein CcmA (214 aa).

Residues 8–212 form the ABC transporter domain; sequence LYAADLACLK…PPTVLDLSEV (205 aa). 40–47 provides a ligand contact to ATP; that stretch reads GPNGFGKT.

The protein belongs to the ABC transporter superfamily. CcmA exporter (TC 3.A.1.107) family. As to quaternary structure, the complex is composed of two ATP-binding proteins (CcmA) and two transmembrane proteins (CcmB).

The protein localises to the cell inner membrane. It catalyses the reaction heme b(in) + ATP + H2O = heme b(out) + ADP + phosphate + H(+). Functionally, part of the ABC transporter complex CcmAB involved in the biogenesis of c-type cytochromes; once thought to export heme, this seems not to be the case, but its exact role is uncertain. Responsible for energy coupling to the transport system. The protein is Cytochrome c biogenesis ATP-binding export protein CcmA of Aromatoleum aromaticum (strain DSM 19018 / LMG 30748 / EbN1) (Azoarcus sp. (strain EbN1)).